We begin with the raw amino-acid sequence, 283 residues long: Phosphatidylglycerol--prolipoprotein diacylglyceryl transferase (283 aa).

The next 3 membrane-spanning stretches (helical) occupy residues 14-34 (LGPLAVHWYGLMYLLGFALFL), 56-76 (MLMYGAVGVVVGGRLGEVLFY), and 88-108 (IFMVWKGGMSFHGGFLGVLIA). R139 provides a ligand contact to a 1,2-diacyl-sn-glycero-3-phospho-(1'-sn-glycerol). Residues 258 to 278 (MGQWLSLPMIVIGVALLVFFG) traverse the membrane as a helical segment.

It belongs to the Lgt family.

The protein resides in the cell inner membrane. It carries out the reaction L-cysteinyl-[prolipoprotein] + a 1,2-diacyl-sn-glycero-3-phospho-(1'-sn-glycerol) = an S-1,2-diacyl-sn-glyceryl-L-cysteinyl-[prolipoprotein] + sn-glycerol 1-phosphate + H(+). It participates in protein modification; lipoprotein biosynthesis (diacylglyceryl transfer). Functionally, catalyzes the transfer of the diacylglyceryl group from phosphatidylglycerol to the sulfhydryl group of the N-terminal cysteine of a prolipoprotein, the first step in the formation of mature lipoproteins. The protein is Phosphatidylglycerol--prolipoprotein diacylglyceryl transferase of Chromobacterium violaceum (strain ATCC 12472 / DSM 30191 / JCM 1249 / CCUG 213 / NBRC 12614 / NCIMB 9131 / NCTC 9757 / MK).